We begin with the raw amino-acid sequence, 98 residues long: MEAPSENGFYFYVLWCADQTLYTGYTVNLKQRVARHNSGQGAKYTRVPKRRPVQLLYYESFENQHDAMSAEYFFKKQSRKEKLKYLKNNGVIVTTFSH.

Positions Asn7–Lys84 constitute a GIY-YIG domain.

This sequence belongs to the UPF0213 family.

The sequence is that of UPF0213 protein in ldhD 5'region from Pediococcus acidilactici.